A 224-amino-acid chain; its full sequence is Serum amyloid P-component (224 aa).

An N-terminal signal peptide occupies residues 1–19; sequence MNKLMSWVSVLIILPEAFA. In terms of domain architecture, Pentraxin (PTX) spans 24–224; that stretch reads RGKVFVFPRE…YVIVKPMVWG (201 aa). Asn-51 carries N-linked (GlcNAc...) asparagine glycosylation. A disulfide bridge links Cys-55 with Cys-114. Asp-77, Asn-78, Glu-155, Gln-156, and Asp-157 together coordinate Ca(2+). A glycan (N-linked (GlcNAc...) asparagine) is linked at Asn-166. Gln-167 is a Ca(2+) binding site.

It belongs to the pentraxin family. As to quaternary structure, homopentamer. Pentraxin (or pentaxin) have a discoid arrangement of 5 non-covalently bound subunits. The cofactor is Ca(2+).

It is found in the secreted. This chain is Serum amyloid P-component (APCS), found in Bos taurus (Bovine).